Consider the following 184-residue polypeptide: Ribosome-recycling factor (184 aa).

This sequence belongs to the RRF family.

Its subcellular location is the cytoplasm. In terms of biological role, responsible for the release of ribosomes from messenger RNA at the termination of protein biosynthesis. May increase the efficiency of translation by recycling ribosomes from one round of translation to another. The polypeptide is Ribosome-recycling factor (Aquifex aeolicus (strain VF5)).